The following is a 92-amino-acid chain: Small ribosomal subunit protein uS19c (92 aa).

The protein belongs to the universal ribosomal protein uS19 family.

It localises to the plastid. The protein localises to the chloroplast. Protein S19 forms a complex with S13 that binds strongly to the 16S ribosomal RNA. This Huperzia lucidula (Shining clubmoss) protein is Small ribosomal subunit protein uS19c.